The following is a 152-amino-acid chain: Cytochrome c-type biogenesis CcmH-like mitochondrial protein (152 aa).

Topologically, residues 1 to 83 (MATEEDVKQR…ILYTPKFDLQ (83 aa)) are mitochondrial intermembrane. The heme site is built by Cys-26 and Cys-29. Residues 84–104 (TAAIWLSPVIVGGVAAGVWAY) form a helical membrane-spanning segment. Topologically, residues 105-152 (QKHRQRTNVHIMALNLVRGVPLTPREKETMLDVLTPPPPANKWWWPGK) are mitochondrial matrix.

The protein belongs to the CcmH/CycL/Ccl2/NrfF family.

It localises to the mitochondrion inner membrane. Its function is as follows. Plays a role in mitochondrial cytochrome c maturation. Probable component of a heme lyase complex involved in the reduction of apocytochrome c. The polypeptide is Cytochrome c-type biogenesis CcmH-like mitochondrial protein (Oryza sativa subsp. japonica (Rice)).